The primary structure comprises 380 residues: Putative ankyrin repeat protein RF_1306 (380 aa).

ANK repeat units follow at residues 48-76 (NKWSDLHIAVGAKELKLVKALCNEKNINA), 80-109 (KCRTPLELAILGNDLETVKFLVQMGGKIAP), 112-143 (YGWSAIHLAIKIDNVEMVEYLYENTEFQKYDK), 170-199 (NNKTPLELAVESKNISSVKALIIKGAKFDI), 203-233 (LGYKIFELAIDSEDMKLIEYLVNHTLVGKNT), 239-268 (LEKVAQIYDKNINLSKLVKVLIKDNAGFDK), 270-299 (LGQKLLQKAIYADDLELVETLYSKGVDAQY), 303-333 (LGRSGLHHAIKANCGEELIQFLIEHTTDINY), and 337-366 (SGLNPLGLAKSNNCTVATKLLLEAGAYESY).

In Rickettsia felis (strain ATCC VR-1525 / URRWXCal2) (Rickettsia azadi), this protein is Putative ankyrin repeat protein RF_1306.